A 466-amino-acid polypeptide reads, in one-letter code: Ribulose bisphosphate carboxylase large chain (466 aa).

Lysine 5 carries the post-translational modification N6,N6,N6-trimethyllysine. Substrate is bound by residues asparagine 114 and threonine 164. Lysine 166 acts as the Proton acceptor in catalysis. A substrate-binding site is contributed by lysine 168. Mg(2+) contacts are provided by lysine 192, aspartate 194, and glutamate 195. Residue lysine 192 is modified to N6-carboxylysine. Histidine 285 serves as the catalytic Proton acceptor. The substrate site is built by arginine 286, histidine 318, and serine 370.

It belongs to the RuBisCO large chain family. Type I subfamily. As to quaternary structure, heterohexadecamer of 8 large chains and 8 small chains; disulfide-linked. The disulfide link is formed within the large subunit homodimers. Mg(2+) serves as cofactor. Post-translationally, the disulfide bond which can form in the large chain dimeric partners within the hexadecamer appears to be associated with oxidative stress and protein turnover.

The protein resides in the plastid. Its subcellular location is the chloroplast. It catalyses the reaction 2 (2R)-3-phosphoglycerate + 2 H(+) = D-ribulose 1,5-bisphosphate + CO2 + H2O. The catalysed reaction is D-ribulose 1,5-bisphosphate + O2 = 2-phosphoglycolate + (2R)-3-phosphoglycerate + 2 H(+). Its function is as follows. RuBisCO catalyzes two reactions: the carboxylation of D-ribulose 1,5-bisphosphate, the primary event in carbon dioxide fixation, as well as the oxidative fragmentation of the pentose substrate in the photorespiration process. Both reactions occur simultaneously and in competition at the same active site. This is Ribulose bisphosphate carboxylase large chain from Moringa oleifera (Horseradish tree).